We begin with the raw amino-acid sequence, 256 residues long: Acetylglutamate kinase (256 aa).

Residues 40-41, Arg62, and Asn154 contribute to the substrate site; that span reads GG.

The protein belongs to the acetylglutamate kinase family. ArgB subfamily.

It localises to the cytoplasm. It catalyses the reaction N-acetyl-L-glutamate + ATP = N-acetyl-L-glutamyl 5-phosphate + ADP. It participates in amino-acid biosynthesis; L-arginine biosynthesis; N(2)-acetyl-L-ornithine from L-glutamate: step 2/4. Its function is as follows. Catalyzes the ATP-dependent phosphorylation of N-acetyl-L-glutamate. The protein is Acetylglutamate kinase of Staphylococcus aureus (strain bovine RF122 / ET3-1).